The sequence spans 604 residues: MLLKELSALASPLNDQQIGQLQQAASELSPQQLAWVSGYFWGISQTSGATQPINQAAAAVSSQPAGKLSIIFASQTGNAKGVAEALKEEAAAAGIAVELFDASDYKGKHLAKETHVIIVASTNGEGEAPDNAIELHEFLQSKKAPKLDNLHYGVIGLGDSSYEFFCQTGKDFDAFLSKQGATPFIERVDLDVDYEAPAAEWRKQALDKVKEALASEAQSAQVVQLPVGQAAHTSQYSKQNPYTATLLTSQKITGRDSGKDVRHIEIDLDGSGLTYQPGDALGVWFENSPELASAILKQVGLTGDEAVEVDGDSISLQKALVEKYEITSANPQLVTQYAELSGSKKLEKLAADKDKLRQYSGNTQVIDVLSEKKAKLTAEQLVGLLRRLTPRLYSIASSQSEVDEEVHLTVGVVEYLQGDETRFGGASSFLSHRLEEGDDVKVFVEHNNNFKLPQDDNAPVIMIGPGTGIAPFRSFVQERDNRDAEGKNWLFFGDRIFTQDFLYQVEWQKYLKSGIVNQLDVAFSRDQQEKVYVQHRILEHAAQVWQWLQDGAYIYVCGDATRMAKDVHEALICVVEQHGQKTREEAEQFVNELRKAKRYQRDVY.

One can recognise a Flavodoxin-like domain in the interval 68 to 206; it reads LSIIFASQTG…PAAEWRKQAL (139 aa). Residues 74–79, 121–124, and 157–166 contribute to the FMN site; these read SQTGNA, STNG, and LGDSSYEFFC. The FAD-binding FR-type domain maps to 239 to 453; the sequence is QNPYTATLLT…VEHNNNFKLP (215 aa). Residues Thr-327, Gly-361, 391–394, 409–411, Tyr-415, and 424–427 contribute to the FAD site; these read RLYS, TVG, and GGAS. NADP(+) contacts are provided by residues 524-525, 530-534, and Asp-566; these read SR and KVYVQ. Position 604 (Tyr-604) interacts with FAD.

It belongs to the NADPH-dependent sulphite reductase flavoprotein subunit CysJ family. This sequence in the N-terminal section; belongs to the flavodoxin family. The protein in the C-terminal section; belongs to the flavoprotein pyridine nucleotide cytochrome reductase family. As to quaternary structure, alpha(8)-beta(8). The alpha component is a flavoprotein, the beta component is a hemoprotein. It depends on FAD as a cofactor. FMN serves as cofactor.

The enzyme catalyses hydrogen sulfide + 3 NADP(+) + 3 H2O = sulfite + 3 NADPH + 4 H(+). It participates in sulfur metabolism; hydrogen sulfide biosynthesis; hydrogen sulfide from sulfite (NADPH route): step 1/1. In terms of biological role, component of the sulfite reductase complex that catalyzes the 6-electron reduction of sulfite to sulfide. This is one of several activities required for the biosynthesis of L-cysteine from sulfate. The flavoprotein component catalyzes the electron flow from NADPH -&gt; FAD -&gt; FMN to the hemoprotein component. This chain is Sulfite reductase [NADPH] flavoprotein alpha-component, found in Aliivibrio fischeri (strain ATCC 700601 / ES114) (Vibrio fischeri).